Consider the following 254-residue polypeptide: PSME3-interacting protein (254 aa).

Residue Met-1 is modified to N-acetylmethionine. Ser-17 carries the phosphoserine modification. Over residues 22–39 (DERRKRRQEEWEKVRKPE) the composition is skewed to basic and acidic residues. Residues 22-52 (DERRKRRQEEWEKVRKPEDPEECPEEVYDPR) form a disordered region. Residue Lys-139 is modified to N6-acetyllysine. The interval 155-195 (GAVKHKSSESGNSVKRLKPDPEPDDKNQEPSSCKSLGNTSL) is disordered. The span at 171-182 (LKPDPEPDDKNQ) shows a compositional bias: basic and acidic residues. Over residues 183–195 (EPSSCKSLGNTSL) the composition is skewed to polar residues. Residues 201-254 (HCPSAAVCIGILPGLGAYSGSSDSESSSDSEGTINATGKIVSSIFRTNTFLEAP) form an interaction with PSME3 region. A phosphoserine; by CK2 mark is found at Ser-222 and Ser-228.

Interacts (via C-terminus) with both free and 20S proteasome-bound forms of the proteasome activator complex subunit PSME3; the interaction is direct. In terms of processing, phosphorylation by CK2 stabilizes the interaction with PSME3.

It is found in the nucleus. Functionally, promotes the association of the proteasome activator complex subunit PSME3 with the 20S proteasome and regulates its activity. Inhibits PSME3-mediated degradation of some proteasome substrates, probably by affecting their diffusion rate into the catalytic chamber of the proteasome. Also inhibits the interaction of PSME3 with COIL, inhibits accumulation of PSME3 in Cajal bodies and positively regulates the number of Cajal bodies in the nucleus. The polypeptide is PSME3-interacting protein (Homo sapiens (Human)).